Consider the following 31-residue polypeptide: Cytochrome b6-f complex subunit 6 (31 aa).

A helical membrane pass occupies residues 4-24 (ITSYFGFLLAALTITSALFIG).

This sequence belongs to the PetL family. In terms of assembly, the 4 large subunits of the cytochrome b6-f complex are cytochrome b6, subunit IV (17 kDa polypeptide, PetD), cytochrome f and the Rieske protein, while the 4 small subunits are PetG, PetL, PetM and PetN. The complex functions as a dimer.

The protein localises to the plastid. It localises to the chloroplast thylakoid membrane. Functionally, component of the cytochrome b6-f complex, which mediates electron transfer between photosystem II (PSII) and photosystem I (PSI), cyclic electron flow around PSI, and state transitions. PetL is important for photoautotrophic growth as well as for electron transfer efficiency and stability of the cytochrome b6-f complex. This is Cytochrome b6-f complex subunit 6 from Solanum tuberosum (Potato).